Reading from the N-terminus, the 255-residue chain is tRNA pseudouridine synthase A (255 aa).

The active-site Nucleophile is the Asp-43. Position 94 (Tyr-94) interacts with substrate.

It belongs to the tRNA pseudouridine synthase TruA family.

It carries out the reaction uridine(38/39/40) in tRNA = pseudouridine(38/39/40) in tRNA. Formation of pseudouridine at positions 38, 39 and 40 in the anticodon stem and loop of transfer RNAs. This Pyrobaculum islandicum (strain DSM 4184 / JCM 9189 / GEO3) protein is tRNA pseudouridine synthase A.